Reading from the N-terminus, the 213-residue chain is Ribonuclease HII (213 aa).

Residues 1 to 206 (MICGVDEAGK…VSTLLAKKTQ (206 aa)) form the RNase H type-2 domain. Aspartate 6, glutamate 7, and aspartate 101 together coordinate a divalent metal cation.

This sequence belongs to the RNase HII family. The cofactor is Mn(2+). Mg(2+) is required as a cofactor.

The protein localises to the cytoplasm. The catalysed reaction is Endonucleolytic cleavage to 5'-phosphomonoester.. Its function is as follows. Endonuclease that specifically degrades the RNA of RNA-DNA hybrids. This is Ribonuclease HII from Methanoregula boonei (strain DSM 21154 / JCM 14090 / 6A8).